Consider the following 819-residue polypeptide: Endonuclease MutS2 (819 aa).

ATP is bound at residue glycine 339–threonine 346. The 76-residue stretch at valine 744 to alanine 819 folds into the Smr domain.

It belongs to the DNA mismatch repair MutS family. MutS2 subfamily. Homodimer. Binds to stalled ribosomes, contacting rRNA.

In terms of biological role, endonuclease that is involved in the suppression of homologous recombination and thus may have a key role in the control of bacterial genetic diversity. Its function is as follows. Acts as a ribosome collision sensor, splitting the ribosome into its 2 subunits. Detects stalled/collided 70S ribosomes which it binds and splits by an ATP-hydrolysis driven conformational change. Acts upstream of the ribosome quality control system (RQC), a ribosome-associated complex that mediates the extraction of incompletely synthesized nascent chains from stalled ribosomes and their subsequent degradation. Probably generates substrates for RQC. The protein is Endonuclease MutS2 of Gemmatimonas aurantiaca (strain DSM 14586 / JCM 11422 / NBRC 100505 / T-27).